The following is a 734-amino-acid chain: Photosystem I P700 chlorophyll a apoprotein A2 (734 aa).

8 helical membrane-spanning segments follow: residues 46–69 (IFASHFGQLAIIFLWTSGNLFHVA), 135–158 (LYTGALFLLFLSAISLIAGWLHLQ), 175–199 (LNHHLSGLFGVSSLAWTGHLVHVAI), 273–291 (IAHHHLAIAFVFLVAGHMY), 330–353 (IHFQLGLALASLGVITSLVAQHMY), 369–395 (AALYTHHQYIAGFIMTGAFAHGAIFFI), 417–439 (AIKSHLSWASLFLGFHTLGLYVH), and 517–535 (FLVHHAIALGLHTTTLILV). Positions 559 and 568 each coordinate [4Fe-4S] cluster. Helical transmembrane passes span 575 to 596 (AFYLAVFWMLNTIGWVTFYWHW) and 643 to 665 (LSVWAWMFLFGHLVWATGFMFLI). Positions 654, 662, and 670 each coordinate chlorophyll a. Trp671 lines the phylloquinone pocket. A helical membrane pass occupies residues 707 to 727 (LVGLAHFSVGYIFTYAAFLIA).

This sequence belongs to the PsaA/PsaB family. As to quaternary structure, the PsaA/B heterodimer binds the P700 chlorophyll special pair and subsequent electron acceptors. PSI consists of a core antenna complex that captures photons, and an electron transfer chain that converts photonic excitation into a charge separation. The eukaryotic PSI reaction center is composed of at least 11 subunits. It depends on P700 is a chlorophyll a/chlorophyll a' dimer, A0 is one or more chlorophyll a, A1 is one or both phylloquinones and FX is a shared 4Fe-4S iron-sulfur center. as a cofactor.

The protein localises to the plastid. It localises to the chloroplast thylakoid membrane. The catalysed reaction is reduced [plastocyanin] + hnu + oxidized [2Fe-2S]-[ferredoxin] = oxidized [plastocyanin] + reduced [2Fe-2S]-[ferredoxin]. In terms of biological role, psaA and PsaB bind P700, the primary electron donor of photosystem I (PSI), as well as the electron acceptors A0, A1 and FX. PSI is a plastocyanin-ferredoxin oxidoreductase, converting photonic excitation into a charge separation, which transfers an electron from the donor P700 chlorophyll pair to the spectroscopically characterized acceptors A0, A1, FX, FA and FB in turn. Oxidized P700 is reduced on the lumenal side of the thylakoid membrane by plastocyanin. In Illicium oligandrum (Star anise), this protein is Photosystem I P700 chlorophyll a apoprotein A2.